Consider the following 575-residue polypeptide: DNA polymerase (575 aa).

The 3'-5' exonuclease and strand displacement activities stretch occupies residues 1–191 (MKHMPRKMYS…KQGLDRMTAG (191 aa)). Positions 145 and 169 each coordinate Mg(2+). The interval 192–229 (SDSLKGFKDIITTKKFKKVFPTLSLGLDKEVRYAYRGG) is involved in DNA-binding, coordination between DNA synthesis and degradation and TP interaction. The initiation, polymerization and pyrophosphorolytic activities stretch occupies residues 230–562 (FTWLNDRFKE…KMKPKPVQVP (333 aa)). 2 residues coordinate Mg(2+): aspartate 249 and valine 250. 5-methyl-UTP contacts are provided by tyrosine 254, lysine 371, and lysine 383. Residues 398–420 (DVTGKVPYLKENGALGFRLGEEE) are TPR2. The YCDTD signature appears at 454-458 (YCDTD). The Mg(2+) site is built by aspartate 456 and aspartate 458. Aspartate 458 contacts 5-methyl-UTP. Positions 563–575 (GGVVLVDDTFTIK) are involved in DNA-binding and TP interaction.

It belongs to the DNA polymerase type-B family. In terms of assembly, interacts with the primer terminal protein; this interaction allows the initiation of TP-primed DNA replication at both viral DNA ends. Interacts with DNA. It depends on Mg(2+) as a cofactor.

The enzyme catalyses DNA(n) + a 2'-deoxyribonucleoside 5'-triphosphate = DNA(n+1) + diphosphate. Functionally, polymerase responsible for protein-primed viral DNA replication by strand displacement with high processivity and fidelity. To start replication, the DNA polymerase forms a heterodimer with a free primer terminal protein (TP), recognizes the replication origins at both 5' ends of the linear chromosome, and initiates replication using as primer the OH-group of Ser-232 of the TP. This polymerase possesses three enzymatic activities: DNA synthesis (polymerase), primer terminal protein (TP) deoxynucleotidylation, which is the formation of a covalent linkage (phosphoester) between the hydroxyl group of a specific serine residue in TP and 5'-dAMP, a reaction directed by the second T at the 3' end, and 3' to 5' exonuclease activity. Exonuclease activity has a proofreading purpose. DNA polymerase edits the polymerization errors using an intramolecular pathway as the primer terminus travels from one active site to the other without dissociation from the DNA. DNA polymerization catalyzed by the DNA polymerase is a highly accurate process, but the protein-primed initiation is a quite inaccurate reaction. Since the polymerase initiates the replication on the second thymine, the TP-dAMP initiation product translocates backwards to recover the template information of the first nucleotide (sliding back-mechanism). This chain is DNA polymerase (2), found in Bacillus subtilis (Bacteriophage phi-29).